A 238-amino-acid polypeptide reads, in one-letter code: Ribitol-5-phosphate cytidylyltransferase (238 aa).

CTP is bound by residues 7–10 and 81–87; these read LAGG and GSDRNET.

The protein belongs to the IspD/TarI cytidylyltransferase family. TarI subfamily.

It catalyses the reaction D-ribitol 5-phosphate + CTP + H(+) = CDP-L-ribitol + diphosphate. It functions in the pathway cell wall biogenesis; poly(ribitol phosphate) teichoic acid biosynthesis. Functionally, catalyzes the transfer of the cytidylyl group of CTP to D-ribitol 5-phosphate. The sequence is that of Ribitol-5-phosphate cytidylyltransferase from Staphylococcus saprophyticus subsp. saprophyticus (strain ATCC 15305 / DSM 20229 / NCIMB 8711 / NCTC 7292 / S-41).